We begin with the raw amino-acid sequence, 355 residues long: Cell surface glycoprotein CD200 receptor 1 (355 aa).

A signal peptide spans 1–26 (MPCTWITSDLQLRLILTLFFVAECLS). Residues 27-267 (AGMEGTKTSN…QGAEIPAHLK (241 aa)) are Extracellular-facing. Residues 35–55 (SNNSMQQLDNGNHSSVSTTSS) are compositionally biased toward polar residues. A disordered region spans residues 35–56 (SNNSMQQLDNGNHSSVSTTSST). N-linked (GlcNAc...) asparagine glycosylation is found at N46, N123, and N153. 4 disulfides stabilise this stretch: C85/C156, C108/C124, C191/C241, and C210/C229. Residues 139 to 257 (PALQVDPVAI…GNKSLSIQLS (119 aa)) form the Ig-like C2-type domain. A helical membrane pass occupies residues 268-288 (NLYITAPIFIILIVVGSIWLL). Residues 289–355 (KISGCRKCKL…NLHTIYVPRV (67 aa)) are Cytoplasmic-facing.

The protein belongs to the CD200R family. In terms of assembly, CD200 and CD200R1 interact via their respective N-terminal Ig-like domains.

The protein localises to the cell membrane. Inhibitory receptor for the CD200/OX2 cell surface glycoprotein. Limits inflammation by inhibiting the expression of pro-inflammatory molecules including TNF-alpha, interferons, and inducible nitric oxide synthase (iNOS) in response to selected stimuli. In Bos taurus (Bovine), this protein is Cell surface glycoprotein CD200 receptor 1 (CD200R1).